Here is a 343-residue protein sequence, read N- to C-terminus: Holliday junction branch migration complex subunit RuvB (343 aa).

The large ATPase domain (RuvB-L) stretch occupies residues 1-185 (MMNENLDATG…FGISSRLQYY (185 aa)). ATP contacts are provided by residues Leu24, Arg25, Gly66, Lys69, Thr70, Thr71, 132-134 (EDY), Arg175, Tyr185, and Arg222. Residue Thr70 coordinates Mg(2+). The tract at residues 186 to 256 (STELLSGIVE…IAKFGLKALN (71 aa)) is small ATPAse domain (RuvB-S). The interval 259–343 (AHGLDEMDNK…GSNQGGLFDN (85 aa)) is head domain (RuvB-H). Residues Arg314 and Arg319 each contribute to the DNA site.

This sequence belongs to the RuvB family. Homohexamer. Forms an RuvA(8)-RuvB(12)-Holliday junction (HJ) complex. HJ DNA is sandwiched between 2 RuvA tetramers; dsDNA enters through RuvA and exits via RuvB. An RuvB hexamer assembles on each DNA strand where it exits the tetramer. Each RuvB hexamer is contacted by two RuvA subunits (via domain III) on 2 adjacent RuvB subunits; this complex drives branch migration. In the full resolvosome a probable DNA-RuvA(4)-RuvB(12)-RuvC(2) complex forms which resolves the HJ.

It is found in the cytoplasm. It carries out the reaction ATP + H2O = ADP + phosphate + H(+). Its function is as follows. The RuvA-RuvB-RuvC complex processes Holliday junction (HJ) DNA during genetic recombination and DNA repair, while the RuvA-RuvB complex plays an important role in the rescue of blocked DNA replication forks via replication fork reversal (RFR). RuvA specifically binds to HJ cruciform DNA, conferring on it an open structure. The RuvB hexamer acts as an ATP-dependent pump, pulling dsDNA into and through the RuvAB complex. RuvB forms 2 homohexamers on either side of HJ DNA bound by 1 or 2 RuvA tetramers; 4 subunits per hexamer contact DNA at a time. Coordinated motions by a converter formed by DNA-disengaged RuvB subunits stimulates ATP hydrolysis and nucleotide exchange. Immobilization of the converter enables RuvB to convert the ATP-contained energy into a lever motion, pulling 2 nucleotides of DNA out of the RuvA tetramer per ATP hydrolyzed, thus driving DNA branch migration. The RuvB motors rotate together with the DNA substrate, which together with the progressing nucleotide cycle form the mechanistic basis for DNA recombination by continuous HJ branch migration. Branch migration allows RuvC to scan DNA until it finds its consensus sequence, where it cleaves and resolves cruciform DNA. In Christiangramia forsetii (strain DSM 17595 / CGMCC 1.15422 / KT0803) (Gramella forsetii), this protein is Holliday junction branch migration complex subunit RuvB.